A 361-amino-acid chain; its full sequence is MPGCPCPGCGMAGQRLLFLTVLALELLERAGGSQPALRSLGAAAACRLDNKESESWGALLSGERLDTWICSLLGSLMVGLSGVFPLLVIPLEMGTLLQSEAGAWRLRQLLSFALGGLLGNVFLHLLPEAWAYTCNITPGGEGQSLQRQQQLGLWVIAGFLTFLALEKMFLNSKEDPSQAPSKDPTAAALNGGHCLAQPAAEPGLRAVVRNLKVSGYLNLLANTIDNFTHGLAVAASFLVSKKIGLLTTMAILLHEIPHEVGDFAILLRAGFDRWTAAKLQFSTALGGLLGACFAICTQSPKGVEETVVWILPFTSGGFLYIALVNVLPDLLEEDDPWHSLQQVLLLCSGVLVMVLLSLFVE.

Residues 1–6 (MPGCPC) are Lumenal-facing. Residues 7-27 (PGCGMAGQRLLFLTVLALELL) form a helical membrane-spanning segment. Over 28–68 (ERAGGSQPALRSLGAAAACRLDNKESESWGALLSGERLDTW) the chain is Cytoplasmic. Residues 69 to 89 (ICSLLGSLMVGLSGVFPLLVI) form a helical membrane-spanning segment. Residues 90–108 (PLEMGTLLQSEAGAWRLRQ) lie on the Lumenal side of the membrane. A helical transmembrane segment spans residues 109–129 (LLSFALGGLLGNVFLHLLPEA). At 130–150 (WAYTCNITPGGEGQSLQRQQQ) the chain is on the cytoplasmic side. The chain crosses the membrane as a helical span at residues 151-171 (LGLWVIAGFLTFLALEKMFLN). The Lumenal segment spans residues 172–232 (SKEDPSQAPS…TIDNFTHGLA (61 aa)). The chain crosses the membrane as a helical span at residues 233–253 (VAASFLVSKKIGLLTTMAILL). An XEXPHE-motif motif is present at residues 254–259 (HEIPHE). The Cytoplasmic segment spans residues 254-275 (HEIPHEVGDFAILLRAGFDRWT). A helical membrane pass occupies residues 276-296 (AAKLQFSTALGGLLGACFAIC). Residues 297–306 (TQSPKGVEET) lie on the Lumenal side of the membrane. The chain crosses the membrane as a helical span at residues 307 to 327 (VVWILPFTSGGFLYIALVNVL). At 328-339 (PDLLEEDDPWHS) the chain is on the cytoplasmic side. The helical transmembrane segment at 340–360 (LQQVLLLCSGVLVMVLLSLFV) threads the bilayer. A topological domain (lumenal) is located at residue Glu361.

It belongs to the ZIP transporter (TC 2.A.5) family. As to quaternary structure, homodimer. As to expression, highly expressed in some tissues such as bone and eye. Expressed in osteoblasts of tibia and of alveolar bone, in proliferative zone of growth plate, and in odontoblasts on the forming of the dentine of crown in molar tooth. Also expressed fibroblasts in reticular layer of dermis of skin.

The protein resides in the golgi apparatus membrane. It localises to the cytoplasmic vesicle membrane. Its subcellular location is the endoplasmic reticulum membrane. It catalyses the reaction Zn(2+)(in) = Zn(2+)(out). Functionally, functions as a zinc transporter transporting Zn(2+) from the Golgi apparatus to the cytosol and thus influences the zinc level at least in areas of the cytosol. May regulate beige adipocyte differentiation. The polypeptide is Zinc transporter ZIP13 (Mus musculus (Mouse)).